A 94-amino-acid polypeptide reads, in one-letter code: DNA-directed RNA polymerase subunit omega (94 aa).

Belongs to the RNA polymerase subunit omega family. As to quaternary structure, the RNAP catalytic core consists of 2 alpha, 1 beta, 1 beta' and 1 omega subunit. When a sigma factor is associated with the core the holoenzyme is formed, which can initiate transcription.

It carries out the reaction RNA(n) + a ribonucleoside 5'-triphosphate = RNA(n+1) + diphosphate. In terms of biological role, promotes RNA polymerase assembly. Latches the N- and C-terminal regions of the beta' subunit thereby facilitating its interaction with the beta and alpha subunits. The protein is DNA-directed RNA polymerase subunit omega of Tolumonas auensis (strain DSM 9187 / NBRC 110442 / TA 4).